Here is a 121-residue protein sequence, read N- to C-terminus: Small ribosomal subunit protein bS6 (121 aa).

Belongs to the bacterial ribosomal protein bS6 family.

In terms of biological role, binds together with bS18 to 16S ribosomal RNA. This chain is Small ribosomal subunit protein bS6, found in Rickettsia felis (strain ATCC VR-1525 / URRWXCal2) (Rickettsia azadi).